Here is a 427-residue protein sequence, read N- to C-terminus: 3-phosphoshikimate 1-carboxyvinyltransferase (427 aa).

3-phosphoshikimate is bound by residues Lys23, Ser24, and Arg28. Lys23 lines the phosphoenolpyruvate pocket. Phosphoenolpyruvate contacts are provided by Gly97 and Arg125. Residues Ser169, Ser170, Gln171, Ser197, Asp313, Asn336, and Lys340 each coordinate 3-phosphoshikimate. Gln171 contributes to the phosphoenolpyruvate binding site. The active-site Proton acceptor is Asp313. Phosphoenolpyruvate-binding residues include Arg344, Arg386, and Lys411.

This sequence belongs to the EPSP synthase family. As to quaternary structure, monomer.

The protein resides in the cytoplasm. The enzyme catalyses 3-phosphoshikimate + phosphoenolpyruvate = 5-O-(1-carboxyvinyl)-3-phosphoshikimate + phosphate. Its pathway is metabolic intermediate biosynthesis; chorismate biosynthesis; chorismate from D-erythrose 4-phosphate and phosphoenolpyruvate: step 6/7. Catalyzes the transfer of the enolpyruvyl moiety of phosphoenolpyruvate (PEP) to the 5-hydroxyl of shikimate-3-phosphate (S3P) to produce enolpyruvyl shikimate-3-phosphate and inorganic phosphate. This chain is 3-phosphoshikimate 1-carboxyvinyltransferase, found in Yersinia ruckeri.